A 312-amino-acid polypeptide reads, in one-letter code: 2,3-dihydroxyphenylpropionate/2,3-dihydroxicinnamic acid 1,2-dioxygenase (312 aa).

The Proton donor role is filled by His-115. Residue His-179 is the Proton acceptor of the active site.

This sequence belongs to the LigB/MhpB extradiol dioxygenase family. As to quaternary structure, homotetramer. The cofactor is Fe(2+).

The catalysed reaction is 3-(2,3-dihydroxyphenyl)propanoate + O2 = (2Z,4E)-2-hydroxy-6-oxonona-2,4-dienedioate + H(+). The enzyme catalyses (2E)-3-(2,3-dihydroxyphenyl)prop-2-enoate + O2 = (2Z,4E,7E)-2-hydroxy-6-oxonona-2,4,7-trienedioate + H(+). It functions in the pathway aromatic compound metabolism; 3-phenylpropanoate degradation. Catalyzes the non-heme iron(II)-dependent oxidative cleavage of 2,3-dihydroxyphenylpropionic acid and 2,3-dihydroxicinnamic acid into 2-hydroxy-6-ketononadienedioate and 2-hydroxy-6-ketononatrienedioate, respectively. The polypeptide is 2,3-dihydroxyphenylpropionate/2,3-dihydroxicinnamic acid 1,2-dioxygenase (Mycolicibacterium paratuberculosis (strain ATCC BAA-968 / K-10) (Mycobacterium paratuberculosis)).